We begin with the raw amino-acid sequence, 235 residues long: 5'-methylthioadenosine/S-adenosylhomocysteine nucleosidase (235 aa).

The active-site Proton acceptor is glutamate 12. Substrate-binding positions include glycine 78, methionine 153, and 174–175 (ME). The active-site Proton donor is aspartate 198.

It belongs to the PNP/UDP phosphorylase family. MtnN subfamily.

The catalysed reaction is S-adenosyl-L-homocysteine + H2O = S-(5-deoxy-D-ribos-5-yl)-L-homocysteine + adenine. The enzyme catalyses S-methyl-5'-thioadenosine + H2O = 5-(methylsulfanyl)-D-ribose + adenine. It catalyses the reaction 5'-deoxyadenosine + H2O = 5-deoxy-D-ribose + adenine. The protein operates within amino-acid biosynthesis; L-methionine biosynthesis via salvage pathway; S-methyl-5-thio-alpha-D-ribose 1-phosphate from S-methyl-5'-thioadenosine (hydrolase route): step 1/2. Its function is as follows. Catalyzes the irreversible cleavage of the glycosidic bond in both 5'-methylthioadenosine (MTA) and S-adenosylhomocysteine (SAH/AdoHcy) to adenine and the corresponding thioribose, 5'-methylthioribose and S-ribosylhomocysteine, respectively. Also cleaves 5'-deoxyadenosine, a toxic by-product of radical S-adenosylmethionine (SAM) enzymes, into 5-deoxyribose and adenine. The chain is 5'-methylthioadenosine/S-adenosylhomocysteine nucleosidase from Pseudoalteromonas translucida (strain TAC 125).